The primary structure comprises 360 residues: DNA replication and repair protein RecF (360 aa).

30–37 (GQNGSGKT) is an ATP binding site.

It belongs to the RecF family.

The protein localises to the cytoplasm. In terms of biological role, the RecF protein is involved in DNA metabolism; it is required for DNA replication and normal SOS inducibility. RecF binds preferentially to single-stranded, linear DNA. It also seems to bind ATP. This chain is DNA replication and repair protein RecF, found in Shewanella sp. (strain W3-18-1).